A 453-amino-acid polypeptide reads, in one-letter code: MDEDGERRVRTKRSCSPESSDNGSGDEVDWISDLPEALIVLVLLNLPTKDVIKTSVLSTKWRNIWRYVPRLDLDNRHFTEFDSLASFIDRFMRSNRKVNKFKLRCGSDLDGDVDLATCSWKWIYMAIKRKVQHIDVTWPGVRIYPEIYNCESLVSLKLSEVTLTKPEFVSLPSLKVLVLDWVEFYNEFAFDMLMSGCPVLESFTLCRRYLDNVRVLRVISQSLLSFNYYGSSSKSFRDDLVVILDAPKLEKLKLSHQLTASFIIENLSSLVEADIDIEFNFCRGKKFDPDDLPKREMIRNFLVGLSRVKTMTIAACTLEVIYDYSRCEPLPLFPNLSFFSVEFYQKRWEILPFFFKSCSNLKSLVLESDYFPRKRTSIISEPRCLLSSLEYVKIEFALDKGKMELVRYLLENSPILKKLTLSLDHSSRKKSCVILRELITIPRCSTSCRVIVL.

The segment at 1 to 28 (MDEDGERRVRTKRSCSPESSDNGSGDEV) is disordered. A compositionally biased stretch (polar residues) spans 14-23 (SCSPESSDNG). An F-box domain is found at 28–81 (VDWISDLPEALIVLVLLNLPTKDVIKTSVLSTKWRNIWRYVPRLDLDNRHFTEF). LRR repeat units lie at residues 155–179 (SLKL…VLVL), 210–235 (LDNV…SSKS), 246–269 (APKL…NLSS), 305–329 (LSRV…RCEP), and 358–381 (CSNL…IISE). An FBD domain is found at 373–423 (RKRTSIISEPRCLLSSLEYVKIEFALDKGKMELVRYLLENSPILKKLTLSL).

This Arabidopsis thaliana (Mouse-ear cress) protein is Putative F-box/FBD/LRR-repeat protein At1g66290.